Consider the following 197-residue polypeptide: Holliday junction branch migration complex subunit RuvA (197 aa).

Residues 1-64 are domain I; that stretch reads MIASVRGVVQ…EDMLALFGFS (64 aa). Positions 65-143 are domain II; that stretch reads SPAQRALFEL…VATISPQLST (79 aa). Residues 144–153 are flexible linker; the sequence is NPGLLALNTE. Residues 153–197 are domain III; sequence ELIDILTSLGYSTTEAQAALNALPADAPADTEERLRLALQYFGGV.

This sequence belongs to the RuvA family. Homotetramer. Forms an RuvA(8)-RuvB(12)-Holliday junction (HJ) complex. HJ DNA is sandwiched between 2 RuvA tetramers; dsDNA enters through RuvA and exits via RuvB. An RuvB hexamer assembles on each DNA strand where it exits the tetramer. Each RuvB hexamer is contacted by two RuvA subunits (via domain III) on 2 adjacent RuvB subunits; this complex drives branch migration. In the full resolvosome a probable DNA-RuvA(4)-RuvB(12)-RuvC(2) complex forms which resolves the HJ.

Its subcellular location is the cytoplasm. The RuvA-RuvB-RuvC complex processes Holliday junction (HJ) DNA during genetic recombination and DNA repair, while the RuvA-RuvB complex plays an important role in the rescue of blocked DNA replication forks via replication fork reversal (RFR). RuvA specifically binds to HJ cruciform DNA, conferring on it an open structure. The RuvB hexamer acts as an ATP-dependent pump, pulling dsDNA into and through the RuvAB complex. HJ branch migration allows RuvC to scan DNA until it finds its consensus sequence, where it cleaves and resolves the cruciform DNA. This is Holliday junction branch migration complex subunit RuvA from Herpetosiphon aurantiacus (strain ATCC 23779 / DSM 785 / 114-95).